Here is a 198-residue protein sequence, read N- to C-terminus: Recombination protein RecR (198 aa).

The segment at 56 to 71 (CEICGNVSEQATCSIC) adopts a C4-type zinc-finger fold. In terms of domain architecture, Toprim spans 79–174 (ALICVVEEAK…RVTRLASGLP (96 aa)).

This sequence belongs to the RecR family.

In terms of biological role, may play a role in DNA repair. It seems to be involved in an RecBC-independent recombinational process of DNA repair. It may act with RecF and RecO. The sequence is that of Recombination protein RecR from Leifsonia xyli subsp. xyli (strain CTCB07).